A 160-amino-acid polypeptide reads, in one-letter code: SsrA-binding protein (160 aa).

It belongs to the SmpB family.

It is found in the cytoplasm. Required for rescue of stalled ribosomes mediated by trans-translation. Binds to transfer-messenger RNA (tmRNA), required for stable association of tmRNA with ribosomes. tmRNA and SmpB together mimic tRNA shape, replacing the anticodon stem-loop with SmpB. tmRNA is encoded by the ssrA gene; the 2 termini fold to resemble tRNA(Ala) and it encodes a 'tag peptide', a short internal open reading frame. During trans-translation Ala-aminoacylated tmRNA acts like a tRNA, entering the A-site of stalled ribosomes, displacing the stalled mRNA. The ribosome then switches to translate the ORF on the tmRNA; the nascent peptide is terminated with the 'tag peptide' encoded by the tmRNA and targeted for degradation. The ribosome is freed to recommence translation, which seems to be the essential function of trans-translation. In Yersinia enterocolitica serotype O:8 / biotype 1B (strain NCTC 13174 / 8081), this protein is SsrA-binding protein.